Here is an 829-residue protein sequence, read N- to C-terminus: Trimethylamine-N-oxide reductase (829 aa).

Residues 1 to 31 (MNRRDFLKGIASSSFVVLGGSSVLTPLNALA) constitute a signal peptide (tat-type signal). Position 180 (S180) interacts with Mo-bis(molybdopterin guanine dinucleotide).

It belongs to the prokaryotic molybdopterin-containing oxidoreductase family. It depends on Mo-bis(molybdopterin guanine dinucleotide) as a cofactor. In terms of processing, predicted to be exported by the Tat system. The position of the signal peptide cleavage has been experimentally proven.

The protein localises to the periplasm. The enzyme catalyses trimethylamine + 2 Fe(III)-[cytochrome c] + H2O = trimethylamine N-oxide + 2 Fe(II)-[cytochrome c] + 3 H(+). Functionally, reduces trimethylamine-N-oxide (TMAO) into trimethylamine; an anaerobic reaction coupled to energy-yielding reactions. This chain is Trimethylamine-N-oxide reductase (torA), found in Shewanella massilia.